The primary structure comprises 314 residues: Ribonuclease Z (314 aa).

The Zn(2+) site is built by histidine 62, histidine 64, aspartate 66, histidine 67, histidine 144, aspartate 215, and histidine 273. Residue aspartate 66 is the Proton acceptor of the active site.

This sequence belongs to the RNase Z family. In terms of assembly, homodimer. Zn(2+) is required as a cofactor.

The enzyme catalyses Endonucleolytic cleavage of RNA, removing extra 3' nucleotides from tRNA precursor, generating 3' termini of tRNAs. A 3'-hydroxy group is left at the tRNA terminus and a 5'-phosphoryl group is left at the trailer molecule.. In terms of biological role, zinc phosphodiesterase, which displays some tRNA 3'-processing endonuclease activity. Probably involved in tRNA maturation, by removing a 3'-trailer from precursor tRNA. This Prochlorococcus marinus (strain NATL1A) protein is Ribonuclease Z.